The following is a 477-amino-acid chain: UDP-sulfoquinovose synthase, chloroplastic (477 aa).

Residues 1-21 form a disordered region; sequence MAHLLSASCPSVISLSSSSSK. The N-terminal 86 residues, 1–86, are a transit peptide targeting the chloroplast; that stretch reads MAHLLSASCP…TNNSSSKPKR (86 aa). Residues 95–96, 115–119, 158–159, Arg-184, and Asn-202 contribute to the NAD(+) site; these read YC, DNLVR, and DI. Arg-184 serves as a coordination point for substrate. Thr-228 and Tyr-265 together coordinate substrate. The active site involves Thr-228. NAD(+)-binding residues include Tyr-265 and Lys-269. Tyr-265 functions as the Proton acceptor in the catalytic mechanism. Lys-269 is an active-site residue. Substrate is bound at residue Gln-292. Val-295 lines the NAD(+) pocket. Substrate is bound by residues 322 to 325, 337 to 339, and 410 to 412; these read ALNR, TVY, and RVE.

The protein belongs to the NAD(P)-dependent epimerase/dehydratase family. As to quaternary structure, homodimer. It depends on NAD(+) as a cofactor.

It localises to the plastid. It is found in the chloroplast. The catalysed reaction is sulfite + UDP-alpha-D-glucose + H(+) = UDP-alpha-D-6-sulfoquinovose + H2O. Its activity is regulated as follows. Concentrations above 100 uM sulfite inhibit the reaction. Its function is as follows. Involved in the biosynthesis of sulfolipids found in thylakoid membranes. Converts UDP-glucose and sulfite to the sulfolipid head group precursor UDP-sulfoquinovose. The protein is UDP-sulfoquinovose synthase, chloroplastic (SQD1) of Arabidopsis thaliana (Mouse-ear cress).